The primary structure comprises 214 residues: Thymidylate kinase (214 aa).

10-17 (GGEGAGKS) is an ATP binding site.

The protein belongs to the thymidylate kinase family.

It carries out the reaction dTMP + ATP = dTDP + ADP. Functionally, phosphorylation of dTMP to form dTDP in both de novo and salvage pathways of dTTP synthesis. This chain is Thymidylate kinase, found in Brucella suis biovar 1 (strain 1330).